A 319-amino-acid chain; its full sequence is tRNA uridine(34) hydroxylase (319 aa).

The 99-residue stretch at 133–231 (EDPDSVVIDT…YLEDVSSENS (99 aa)) folds into the Rhodanese domain. The active-site Cysteine persulfide intermediate is the C191.

Belongs to the TrhO family.

The enzyme catalyses uridine(34) in tRNA + AH2 + O2 = 5-hydroxyuridine(34) in tRNA + A + H2O. Its function is as follows. Catalyzes oxygen-dependent 5-hydroxyuridine (ho5U) modification at position 34 in tRNAs. The protein is tRNA uridine(34) hydroxylase of Prochlorococcus marinus (strain NATL1A).